Reading from the N-terminus, the 694-residue chain is Nuclear cap-binding protein subunit 3 (694 aa).

The tract at residues 1-47 (MAAVRSLRVSVKSDSASDRSESDSESDSDRDAREAEPMEVEEGEVEL) is disordered. Over residues 15–36 (SASDRSESDSESDSDRDAREAE) the composition is skewed to basic and acidic residues. Acidic residues predominate over residues 37 to 47 (PMEVEEGEVEL). Residues 126 to 187 (EALHMSGVDD…LSRMPDKEEV (62 aa)) form an RNA recognition motif (RRM) domain region. The WLDD motif; essential for 7-methylguanosine-containing mRNA cap binding motif lies at 155–158 (WIDD). Disordered regions lie at residues 183–277 (DKEE…VKPF), 336–430 (ILKT…MDYD), and 461–694 (LRNS…DSDS). Positions 189-203 (NTDSSKPSELPVQTQ) are enriched in polar residues. Acidic residues predominate over residues 212–235 (DDDDDDDEEEEGEVDDDDDDDEED). The span at 236–264 (EKARDIEDETEKKPQETRETSLSQAERDS) shows a compositional bias: basic and acidic residues. Residues 368 to 386 (EPIEEEEEEEEDGEEDMDA) are compositionally biased toward acidic residues. The span at 387-404 (DDRVVEYKDRGEKERGPR) shows a compositional bias: basic and acidic residues. The span at 477–496 (IGGGGGGGSGGAVEGRGEGG) shows a compositional bias: gly residues. 3 stretches are compositionally biased toward basic and acidic residues: residues 501–517 (TSEK…EKRQ), 563–595 (SRRE…DKKT), and 605–618 (SHKD…DKPS). The span at 634–646 (DSDGVEDEDEEDD) shows a compositional bias: acidic residues. Over residues 685-694 (DGSNGSDSDS) the composition is skewed to low complexity.

The protein belongs to the NCBP3 family. Component of an alternative cap-binding complex (CBC) composed of NCBP1/CBP80 and NCBP3.

It localises to the nucleus. The protein resides in the cytoplasm. Associates with NCBP1/CBP80 to form an alternative cap-binding complex (CBC) which plays a key role in mRNA export. NCBP3 serves as adapter protein linking the capped RNAs (m7GpppG-capped RNA) to NCBP1/CBP80. Unlike the conventional CBC with NCBP2 which binds both small nuclear RNA (snRNA) and messenger (mRNA) and is involved in their export from the nucleus, the alternative CBC with NCBP3 does not bind snRNA and associates only with mRNA thereby playing a role in only mRNA export. The polypeptide is Nuclear cap-binding protein subunit 3 (Danio rerio (Zebrafish)).